A 254-amino-acid polypeptide reads, in one-letter code: 5-oxoprolinase subunit A (254 aa).

Belongs to the LamB/PxpA family. Forms a complex composed of PxpA, PxpB and PxpC.

It catalyses the reaction 5-oxo-L-proline + ATP + 2 H2O = L-glutamate + ADP + phosphate + H(+). In terms of biological role, catalyzes the cleavage of 5-oxoproline to form L-glutamate coupled to the hydrolysis of ATP to ADP and inorganic phosphate. In Burkholderia orbicola (strain MC0-3), this protein is 5-oxoprolinase subunit A.